Reading from the N-terminus, the 859-residue chain is DNA (cytosine-5)-methyltransferase 3B (859 aa).

Positions 1 to 305 are interaction with DNMT1 and DNMT3A; it reads MKGDSRHLNE…LATFNKLVSY (305 aa). Residues 25 to 226 form a disordered region; it reads GNFSDQSSDT…RDGDSTEYQD (202 aa). Residues 85–94 show a composition bias toward acidic residues; sequence DRDDEVDDGN. Position 96 is a phosphoserine (Ser-96). Lys-102 is covalently cross-linked (Glycyl lysine isopeptide (Lys-Gly) (interchain with G-Cter in SUMO2)). Positions 103 to 114 are enriched in basic and acidic residues; sequence LTRETKDTRTRS. The residue at position 112 (Thr-112) is a Phosphothreonine. Ser-116 carries the phosphoserine modification. Residues 167 to 179 are compositionally biased toward low complexity; the sequence is SSSASTPWSSPAS. The span at 189–198 shows a compositional bias: polar residues; the sequence is KSVSTPSVDL. Basic and acidic residues predominate over residues 214–226; that stretch reads AESRDGDSTEYQD. Ser-216 is subject to Phosphoserine. A PWWP domain is found at 232 to 290; the sequence is IGDLVWGKIKGFSWWPAMVVSWKATSKRQAMPGMRWVQWFGDGKFSEISADKLVALGLF. The disordered stretch occupies residues 348-429; it reads KPTGIEGLKP…ESRERMASEV (82 aa). Composition is skewed to basic and acidic residues over residues 370-381 and 412-426; these read RRSDSRNLEPRR and GKDR…ERMA. Residue Arg-415 is modified to Citrulline. The 133-residue stretch at 428-560 folds into the ADD domain; it reads EVTNNKGNLE…LQDFFTTDPD (133 aa). The GATA-type; atypical zinc finger occupies 439-469; the sequence is RCLSCGKKNPVSFHPLFEGGLCQSCRDRFLE. The interaction with the PRC2/EED-EZH2 complex stretch occupies residues 440–532; that stretch reads CLSCGKKNPV…LQEPWSCYMC (93 aa). A PHD-type; atypical zinc finger spans residues 480 to 536; sequence QSYCTVCCEGRELLLCSNTSCCRCFCVECLEVLVGAGTAEDAKLQEPWSCYMCLPQR. One can recognise an SAM-dependent MTase C5-type domain in the interval 581 to 859; sequence IRVLSLFDGI…APLKDYFACE (279 aa). Residues 588 to 592 and Glu-611 each bind S-adenosyl-L-methionine; that span reads DGIAT. Residue Lys-623 forms a Glycyl lysine isopeptide (Lys-Gly) (interchain with G-Cter in SUMO2) linkage. 633–635 is a binding site for S-adenosyl-L-methionine; it reads DVR. Residue Cys-657 is part of the active site. An S-adenosyl-L-methionine-binding site is contributed by 838–840; it reads RSW.

The protein belongs to the class I-like SAM-binding methyltransferase superfamily. C5-methyltransferase family. Interacts with CBX4, DNMT1, DNMT3A, SETDB1, UBE2I9, UBL1 and ZHX1. Interacts with SUV39H1 and BAZ2A/TIP5. Interacts with the PRC2/EED-EZH2 complex. Interacts with UHRF1. Post-translationally, sumoylated. In terms of processing, citrullinated by PADI4.

Its subcellular location is the nucleus. The enzyme catalyses a 2'-deoxycytidine in DNA + S-adenosyl-L-methionine = a 5-methyl-2'-deoxycytidine in DNA + S-adenosyl-L-homocysteine + H(+). With respect to regulation, activated by binding to the regulatory factor DNMT3L. Its function is as follows. Required for genome-wide de novo methylation and is essential for the establishment of DNA methylation patterns during development. DNA methylation is coordinated with methylation of histones. May preferentially methylates nucleosomal DNA within the nucleosome core region. May function as transcriptional co-repressor by associating with CBX4 and independently of DNA methylation. Seems to be involved in gene silencing. In association with DNMT1 and via the recruitment of CTCFL/BORIS, involved in activation of BAG1 gene expression by modulating dimethylation of promoter histone H3 at H3K4 and H3K9. Functions as a transcriptional corepressor by associating with ZHX1. Required for DUX4 silencing in somatic cells. The polypeptide is DNA (cytosine-5)-methyltransferase 3B (Dnmt3b) (Mus musculus (Mouse)).